A 332-amino-acid polypeptide reads, in one-letter code: 2,3-diketo-L-gulonate reductase (332 aa).

Residue His-44 is the Proton donor of the active site. NAD(+)-binding positions include 168 to 174 (ITMIDMS), 224 to 225 (WK), and 304 to 306 (GHE).

The protein belongs to the LDH2/MDH2 oxidoreductase family. DlgD subfamily. As to quaternary structure, homodimer.

It is found in the cytoplasm. It catalyses the reaction 3-dehydro-L-gulonate + NAD(+) = 2,3-dioxo-L-gulonate + NADH + H(+). It carries out the reaction 3-dehydro-L-gulonate + NADP(+) = 2,3-dioxo-L-gulonate + NADPH + H(+). Functionally, catalyzes the reduction of 2,3-diketo-L-gulonate in the presence of NADH, to form 3-keto-L-gulonate. The polypeptide is 2,3-diketo-L-gulonate reductase (Citrobacter koseri (strain ATCC BAA-895 / CDC 4225-83 / SGSC4696)).